Consider the following 321-residue polypeptide: Basic leucine zipper 34 (321 aa).

Positions 97–189 are disordered; that stretch reads TDDDNLHSNP…SGNRILDPKR (93 aa). 3 stretches are compositionally biased toward low complexity: residues 110–133, 145–155, and 172–182; these read NNKN…NSFN, NMNNNINNNYN, and SNNNSGDSSGN. A bZIP domain is found at 186-238; sequence DPKRVKRILANRQSAQRSRVRKLQYISELERSVTSLQAEVSVLSPRVAFLDHQ. Residues 188-207 are basic motif; sequence KRVKRILANRQSAQRSRVRK. The leucine-zipper stretch occupies residues 214–235; sequence LERSVTSLQAEVSVLSPRVAFL.

As to quaternary structure, forms heterodimers with BZIP18, BZIP43 and VIP1/BZIP51. As to expression, expressed in vascular tissues of leaves, stems and siliques, anthers, filaments, tapetum, mature pollen grains, pistil vascular tissues and papillar cells, and funiculi.

It is found in the nucleus. In terms of biological role, transcriptional activator involved in the sporophytic control of cell wall patterning and gametophytic control of pollen development. May play a role in the control of metabolic pathways regulating cellular transport and lipid metabolism. This is Basic leucine zipper 34 from Arabidopsis thaliana (Mouse-ear cress).